The chain runs to 352 residues: tRNA pseudouridine synthase D (352 aa).

D78 acts as the Nucleophile in catalysis. In terms of domain architecture, TRUD spans 153–299; sequence GVPNYYGEQR…LDQDRRPLLL (147 aa).

The protein belongs to the pseudouridine synthase TruD family.

It catalyses the reaction uridine(13) in tRNA = pseudouridine(13) in tRNA. Its function is as follows. Responsible for synthesis of pseudouridine from uracil-13 in transfer RNAs. This chain is tRNA pseudouridine synthase D, found in Aeromonas hydrophila subsp. hydrophila (strain ATCC 7966 / DSM 30187 / BCRC 13018 / CCUG 14551 / JCM 1027 / KCTC 2358 / NCIMB 9240 / NCTC 8049).